The following is a 461-amino-acid chain: tRNA modification GTPase MnmE (461 aa).

The (6S)-5-formyl-5,6,7,8-tetrahydrofolate site is built by R27, E89, and R128. Positions 224 to 382 constitute a TrmE-type G domain; it reads GLATAIVGQP…LEELINKLFF (159 aa). N234 contributes to the K(+) binding site. GTP is bound by residues 234 to 239, 253 to 259, and 278 to 281; these read NVGKSS, TDVAGTT, and DTAG. Position 238 (S238) interacts with Mg(2+). K(+) is bound by residues T253, V255, and T258. Position 259 (T259) interacts with Mg(2+). K461 is a (6S)-5-formyl-5,6,7,8-tetrahydrofolate binding site.

This sequence belongs to the TRAFAC class TrmE-Era-EngA-EngB-Septin-like GTPase superfamily. TrmE GTPase family. In terms of assembly, homodimer. Heterotetramer of two MnmE and two MnmG subunits. The cofactor is K(+).

The protein localises to the cytoplasm. Exhibits a very high intrinsic GTPase hydrolysis rate. Involved in the addition of a carboxymethylaminomethyl (cmnm) group at the wobble position (U34) of certain tRNAs, forming tRNA-cmnm(5)s(2)U34. The polypeptide is tRNA modification GTPase MnmE (Lactobacillus acidophilus (strain ATCC 700396 / NCK56 / N2 / NCFM)).